The following is a 215-amino-acid chain: MLGIRSSVKTCFKPMSLTSKRLISQSLLASKSTYRTPNFDDVLKENNDADKGRSYAYFMVGAMGLLSSAGAKSTVETFISSMTATADVLAMAKVEVNLAAIPLGKNVVVKWQGKPVFIRHRTPHEIQEANSVDMSALKDPQTDADRVKDPQWLIMLGICTHLGCVPIGEAGDFGGWFCPCHGSHYDISGRIRKGPAPLNLEIPAYEFDGDKVIVG.

The transit peptide at 1–22 directs the protein to the mitochondrion; it reads MLGIRSSVKTCFKPMSLTSKRL. A propeptide spans 23–30 (removed in mature form); the sequence is ISQSLLAS. Residues 31–50 are Mitochondrial matrix-facing; it reads KSTYRTPNFDDVLKENNDAD. Residues 51–80 form a helical membrane-spanning segment; the sequence is KGRSYAYFMVGAMGLLSSAGAKSTVETFIS. The Mitochondrial intermembrane portion of the chain corresponds to 81-215; sequence SMTATADVLA…EFDGDKVIVG (135 aa). A hinge region spans residues 90–93; that stretch reads AMAK. Residues 123–214 enclose the Rieske domain; sequence PHEIQEANSV…YEFDGDKVIV (92 aa). [2Fe-2S] cluster contacts are provided by Cys-159, His-161, Cys-178, and His-181. A disulfide bond links Cys-164 and Cys-180.

The protein belongs to the Rieske iron-sulfur protein family. Component of the ubiquinol-cytochrome c oxidoreductase (cytochrome b-c1 complex, complex III, CIII), a multisubunit enzyme composed of 10 subunits. The complex is composed of 3 respiratory subunits cytochrome b (COB), cytochrome c1 (CYT1) and Rieske protein (RIP1), 2 core protein subunits COR1 and QCR2, and 5 low-molecular weight protein subunits QCR6, QCR7, QCR8, QCR9 and QCR10. The complex exists as an obligatory dimer and forms supercomplexes (SCs) in the inner mitochondrial membrane with a monomer or a dimer of cytochrome c oxidase (complex IV, CIV), resulting in 2 different assemblies (supercomplexes III(2)IV and III(2)IV(2)). RIP1 interacts with QCR10 on the intermembrane space (IMS) side, and with QCR9. The cofactor is [2Fe-2S] cluster. In terms of processing, processed by both the mitochondrial processing peptidase (MPP) and the mitochondrial intermediate protease (MIP). Initially, MPP removes 22 amino acids from the newly imported precursor in the mitochondrial matrix. This proteolytic processing is then followed by a second proteolytic cleavage by MIP, which removes an octapeptide to generate mature-sized RIP1.

Its subcellular location is the mitochondrion inner membrane. It carries out the reaction a quinol + 2 Fe(III)-[cytochrome c](out) = a quinone + 2 Fe(II)-[cytochrome c](out) + 2 H(+)(out). Its function is as follows. Component of the ubiquinol-cytochrome c oxidoreductase, a multisubunit transmembrane complex that is part of the mitochondrial electron transport chain which drives oxidative phosphorylation. The respiratory chain contains 3 multisubunit complexes succinate dehydrogenase (complex II, CII), ubiquinol-cytochrome c oxidoreductase (cytochrome b-c1 complex, complex III, CIII) and cytochrome c oxidase (complex IV, CIV), that cooperate to transfer electrons derived from NADH and succinate to molecular oxygen, creating an electrochemical gradient over the inner membrane that drives transmembrane transport and the ATP synthase. The cytochrome b-c1 complex catalyzes electron transfer from ubiquinol to cytochrome c, linking this redox reaction to translocation of protons across the mitochondrial inner membrane, with protons being carried across the membrane as hydrogens on the quinol. In the process called Q cycle, 2 protons are consumed from the matrix, 4 protons are released into the intermembrane space and 2 electrons are passed to cytochrome c. The Rieske protein is a catalytic core subunit containing a [2Fe-2S] iron-sulfur cluster. It cycles between 2 conformational states during catalysis to transfer electrons from the quinol bound in the Q(0) site in cytochrome b (COB) to cytochrome c1 (CYT1). This chain is Cytochrome b-c1 complex subunit Rieske, mitochondrial (RIP1), found in Saccharomyces cerevisiae (strain ATCC 204508 / S288c) (Baker's yeast).